A 177-amino-acid polypeptide reads, in one-letter code: Peptide methionine sulfoxide reductase MsrA (177 aa).

Cys12 is a catalytic residue.

It belongs to the MsrA Met sulfoxide reductase family.

The enzyme catalyses L-methionyl-[protein] + [thioredoxin]-disulfide + H2O = L-methionyl-(S)-S-oxide-[protein] + [thioredoxin]-dithiol. It carries out the reaction [thioredoxin]-disulfide + L-methionine + H2O = L-methionine (S)-S-oxide + [thioredoxin]-dithiol. Its function is as follows. Has an important function as a repair enzyme for proteins that have been inactivated by oxidation. Catalyzes the reversible oxidation-reduction of methionine sulfoxide in proteins to methionine. The chain is Peptide methionine sulfoxide reductase MsrA from Halobacterium salinarum (strain ATCC 29341 / DSM 671 / R1).